Here is a 777-residue protein sequence, read N- to C-terminus: MDTEALKKSLLKKFQEVTADRLQKIQLGVLDLEKETADQAAEDVARELHTMKGEARMLGLAAIGQLAHAAEDVLRAEREGKTATEVATDVLLRACDVLSDLNEDLSGANTGNPASEEMVRMLAEVSGQTPPAIAGARPVAPPPAPPPAPVAAPVVTPAAVAAPPAPVQAPVAPPPTQAPVAEPGAHAAAAAPHPAAAHGRDEEAPSAAKSAVADRSIRVNVEVLDALGLLAGDLLVESARGRLRSSETEALFERFSRLGDRFLRLAEEIDISNEVREQLDRVESDLHMLRDDAFRFVRRNDDGINTLHGNLAKMADHVAEARLVPLSTVFDAFPRAVREMSRTQGKEVDLVIENADIGVDRSMLGDVRDALVHLLRNSVDHGVESPDTRQQLGKPLNGRIRIRVRVDGDMLHIEVEDDGRGIDPERLRQAAISKRLINAVQAAALSEREAIELIFRPGFSTRDQVSELSGRGVGMDVVKRKVETLGGSVGVSSRIGRGSTITLRLPQSLALMKVLLVRLGDDVYGMPAADVEAVMRVKPDDRLEIFGTLAVRHRGKPTALVALGPLLGLNGGNRFDKPPAVVVRHGEDHAALVVDGFVDEREVAVKPCGGEFLKAAPFIAGTAALEDGRIAVLLHVPDIMAEVRRMARPVTQAPAAKRLRVLLVDDSPIARATEGALVKALGHSVEEAQDGEEAYVKVQNNTYDLILTDVQMPKLDGFSLARRLKSTPAVARIPVIILSSLASPEDKRRGLDAGADAYLVKGELGVEVLAQAIDRLT.

The HPt domain maps to Met-1 to Ala-108. Position 49 is a phosphohistidine; by autocatalysis (His-49). Disordered regions lie at residues Thr-129–Pro-149 and Pro-164–Val-212. 2 stretches are compositionally biased toward pro residues: residues Val-139 to Pro-149 and Pro-164 to Gln-177. Positions Ala-178–Ala-197 are enriched in low complexity. A Histidine kinase domain is found at Asp-270–Leu-509. Positions Leu-511–Arg-645 constitute a CheW-like domain. One can recognise a Response regulatory domain in the interval Arg-660–Leu-776. Asp-709 bears the 4-aspartylphosphate mark.

It catalyses the reaction ATP + protein L-histidine = ADP + protein N-phospho-L-histidine.. In terms of biological role, frzE is involved in a sensory transduction pathway that controls the frequency at which cells reverse their gliding direction. FrzE seems to be capable of autophosphorylating itself on a histidine residue and then to transfer that group to an aspartate residue in the C-terminal part of the protein. In Myxococcus xanthus, this protein is Gliding motility regulatory protein (frzE).